A 404-amino-acid polypeptide reads, in one-letter code: Pyrophosphate--fructose 6-phosphate 1-phosphotransferase (404 aa).

Glycine 12 lines the diphosphate pocket. Aspartate 121 is a Mg(2+) binding site. Substrate contacts are provided by residues 149-151 (TID), 194-196 (MGR), glutamate 266, and 323-326 (YFSR). The active-site Proton acceptor is the aspartate 151.

The protein belongs to the phosphofructokinase type A (PFKA) family. PPi-dependent PFK group II subfamily. Clade 'P' sub-subfamily. In terms of assembly, homodimer. Mg(2+) serves as cofactor.

The protein resides in the cytoplasm. It carries out the reaction beta-D-fructose 6-phosphate + diphosphate = beta-D-fructose 1,6-bisphosphate + phosphate + H(+). The protein operates within carbohydrate degradation; glycolysis; D-glyceraldehyde 3-phosphate and glycerone phosphate from D-glucose: step 3/4. With respect to regulation, non-allosteric. In terms of biological role, catalyzes the phosphorylation of D-fructose 6-phosphate, the first committing step of glycolysis. Uses inorganic phosphate (PPi) as phosphoryl donor instead of ATP like common ATP-dependent phosphofructokinases (ATP-PFKs), which renders the reaction reversible, and can thus function both in glycolysis and gluconeogenesis. Consistently, PPi-PFK can replace the enzymes of both the forward (ATP-PFK) and reverse (fructose-bisphosphatase (FBPase)) reactions. This Propionibacterium freudenreichii subsp. shermanii (strain ATCC 9614 / DSM 4902 / CIP 103027 / NCIMB 8099 / CIRM-BIA1) protein is Pyrophosphate--fructose 6-phosphate 1-phosphotransferase.